The primary structure comprises 249 residues: Proteasome subunit alpha type-7-1 (249 aa).

At S177 the chain carries Phosphoserine.

This sequence belongs to the peptidase T1A family. In terms of assembly, the 26S proteasome consists of a 20S proteasome core and two 19S regulatory subunits. The 20S proteasome core is composed of 28 subunits that are arranged in four stacked rings, resulting in a barrel-shaped structure. The two end rings are each formed by seven alpha subunits, and the two central rings are each formed by seven beta subunits. The catalytic chamber with the active sites is on the inside of the barrel. Interacts with PI31; this interaction is reduced by PI31 ADP-ribosylation.

The protein resides in the cytoplasm. The protein localises to the nucleus. Functionally, the proteasome is a multicatalytic proteinase complex which is characterized by its ability to cleave peptides with Arg, Phe, Tyr, Leu, and Glu adjacent to the leaving group at neutral or slightly basic pH. The proteasome has an ATP-dependent proteolytic activity. This is Proteasome subunit alpha type-7-1 (Prosalpha4) from Drosophila melanogaster (Fruit fly).